A 477-amino-acid chain; its full sequence is Tripartite motif-containing protein 72 (477 aa).

Zn(2+) is bound by residues Cys14, Cys17, Cys29, His31, Cys34, Cys37, Cys53, Cys56, Cys86, His89, Cys97, Asp100, Cys105, Cys108, His114, and His117. The RING-type zinc-finger motif lies at 14–57 (CPLCLQLFDAPVTAECGHSFCRACLSRVAGEPAADGTVNCPCCQ). The B box-type zinc-finger motif lies at 81-122 (VPQGHCEEHLDPLSIYCEQDRVLVCGVCASLGSHRGHRLLPA). A coiled-coil region spans residues 135 to 232 (QQKLQLQEAS…EKVLEEVADK (98 aa)). Position 255 is a phosphoserine (Ser255). In terms of domain architecture, B30.2/SPRY spans 271 to 475 (DFKFQVWRKM…PLLLVGPDGQ (205 aa)).

It belongs to the TRIM/RBCC family. Homodimer. Homooligomer; disulfide-linked. Oligomerizes on the phospholipid membrane. Interacts with DYSF and CAV3. Post-translationally, disulfide bond formation at Cys-242 occurs in case of membrane damage that cause the entry of the oxidized milieu of the extracellular space, resulting in homooligomerization. As to expression, muscle-specific.

The protein resides in the cell membrane. It localises to the sarcolemma. Its subcellular location is the cytoplasmic vesicle membrane. It catalyses the reaction S-ubiquitinyl-[E2 ubiquitin-conjugating enzyme]-L-cysteine + [acceptor protein]-L-lysine = [E2 ubiquitin-conjugating enzyme]-L-cysteine + N(6)-ubiquitinyl-[acceptor protein]-L-lysine.. The protein operates within protein modification; protein ubiquitination. Its activity is regulated as follows. Specifically binds phosphatidylserine. The binding to phospholipids enhances ubiquitination activity. Functionally, muscle-specific E3 ubiquitin-protein ligase that plays a central role in cell membrane repair by nucleating the assembly of the repair machinery at injury sites. Its ubiquitination activity is mediated by E2 ubiquitin-conjugating enzymes UBE2D1, UBE2D2 and UBE2D3. Acts as a sensor of oxidation: upon membrane damage, entry of extracellular oxidative environment results in disulfide bond formation and homooligomerization at the injury site. This oligomerization acts as a nucleation site for recruitment of TRIM72-containing vesicles to the injury site, leading to membrane patch formation. Probably acts upstream of the Ca(2+)-dependent membrane resealing process. Required for transport of DYSF to sites of cell injury during repair patch formation. Regulates membrane budding and exocytosis. May be involved in the regulation of the mobility of KCNB1-containing endocytic vesicles. This is Tripartite motif-containing protein 72 from Oryctolagus cuniculus (Rabbit).